A 263-amino-acid polypeptide reads, in one-letter code: Syntaxin-73 (263 aa).

Residues 1-240 (MGVIDLITRV…TVTKLRSSRN (240 aa)) lie on the Cytoplasmic side of the membrane. The residue at position 12 (Ser12) is a Phosphoserine. Positions 169–231 (YEMKRIKQAR…KSTNVRLKDT (63 aa)) constitute a t-SNARE coiled-coil homology domain. Residues 241–261 (FCIDIILLCILLGIAAFIYNS) traverse the membrane as a helical; Anchor for type IV membrane protein segment. At 262 to 263 (VK) the chain is on the vesicular side.

It belongs to the syntaxin family. As to quaternary structure, part of the t-SNARE complex. In terms of tissue distribution, expressed in root, leaf, stem, flower and silique.

The protein resides in the membrane. Its function is as follows. Vesicle trafficking protein that functions in the secretory pathway. This chain is Syntaxin-73 (SYP73), found in Arabidopsis thaliana (Mouse-ear cress).